Here is a 218-residue protein sequence, read N- to C-terminus: Small ribosomal subunit protein mS34 (218 aa).

It belongs to the mitochondrion-specific ribosomal protein mS34 family. In terms of assembly, component of the mitochondrial ribosome small subunit (28S) which comprises a 12S rRNA and about 30 distinct proteins. In terms of tissue distribution, widely expressed (at protein liver).

It is found in the mitochondrion. Functionally, required for mitochondrial translation, plays a role in maintaining the stability of the small ribosomal subunit and the 12S rRNA that are required for mitoribosome formation. This Mus musculus (Mouse) protein is Small ribosomal subunit protein mS34 (Mrps34).